Consider the following 149-residue polypeptide: uncharacterized protein (149 aa).

Residue serine 21 is modified to Phosphoserine. Transmembrane regions (helical) follow at residues 48–68 and 72–92; these read FMEF…WVLG and VLAA…FQLV. The segment at 116-149 is disordered; it reads AEEVPPPSYPSLEEENEGNEEIEESEEMNTLLSK. A compositionally biased stretch (acidic residues) spans 127–142; the sequence is LEEENEGNEEIEESEE.

The protein localises to the membrane. This is an uncharacterized protein from Schizosaccharomyces pombe (strain 972 / ATCC 24843) (Fission yeast).